The sequence spans 512 residues: FAD-linked oxidoreductase iacH (512 aa).

Residues 1–22 form the signal peptide; the sequence is MVSLKACVVAYGFTLLPALVSG. Asn-39, Asn-55, Asn-69, Asn-210, Asn-217, Asn-278, Asn-295, and Asn-367 each carry an N-linked (GlcNAc...) asparagine glycan. The FAD-binding PCMH-type domain maps to 77-248; sequence LDTPDVQLVV…TSLEKKIYPG (172 aa).

It belongs to the oxygen-dependent FAD-linked oxidoreductase family. It depends on FAD as a cofactor.

It functions in the pathway secondary metabolite biosynthesis. In terms of biological role, FAD-linked oxidoreductase; part of the gene cluster that mediates the biosynthesis of iso-A82775C, a enylepoxycyclohexane and biosynthetic precursor of the chloropestolide anticancer natural products. Within the cluster, the prenyltransferase iacE prenylates siccayne to generate pestalodiol E, using dimethylallyl diphosphate (DMAPP) as cosubstrate. The probable oxidoreductase iacF is then involved in the epoxidation of pestalodiol F to pestalodiol F, which is further converted to pestalofone A by the short-chain dehydrogenase/reductase iacG. Iso-A82775C is subsequently generated from pestalofone A by the short-chain dehydrogenase/reductase iacC. Iso-A82775C is further condensed with maldoxin via a Diels-Alder reaction to produce the anticancer natural products chloropestolides A to E. The sequence is that of FAD-linked oxidoreductase iacH from Pestalotiopsis fici (strain W106-1 / CGMCC3.15140).